We begin with the raw amino-acid sequence, 542 residues long: Cytochrome P450 79B1 (542 aa).

Residues 21–41 form a helical membrane-spanning segment; it reads FSNMYLLTTLQAFVAITLVML. C478 is a binding site for heme.

This sequence belongs to the cytochrome P450 family. The cofactor is heme.

It is found in the membrane. Converts tyrosine to para-hydrophenylacetaldoxime in para-hydroxybenzylglucosinolate biosynthesis. The polypeptide is Cytochrome P450 79B1 (CYP79B1) (Sinapis alba (White mustard)).